The sequence spans 142 residues: MEMLQGLLLLWLLLNVGGVWTSRGPLRPLCRPINATLAAENEACPVCVTFTTTICAGYCPSMMRVLPAALPPVPQPVCTYRELRFASVRLPGCPPGVDPVVSFPVALSCRCGPCRLSSSDCGGPRAQPLACDRPPLPGLPFL.

The N-terminal stretch at 1–21 is a signal peptide; it reads MEMLQGLLLLWLLLNVGGVWT. 6 disulfides stabilise this stretch: C30/C78, C44/C93, C47/C131, C55/C109, C59/C111, and C114/C121. N34 carries N-linked (GlcNAc...) asparagine glycosylation.

It belongs to the glycoprotein hormones subunit beta family. In terms of assembly, heterodimer of a common alpha chain and a unique beta chain which confers biological specificity to thyrotropin, lutropin, follitropin and gonadotropin.

It is found in the secreted. Functionally, promotes spermatogenesis and ovulation by stimulating the testes and ovaries to synthesize steroids. The polypeptide is Lutropin subunit beta (LHB) (Panthera tigris altaica (Siberian tiger)).